Here is a 99-residue protein sequence, read N- to C-terminus: RNA-binding protein Hfq (99 aa).

The region spanning 10–71 (DLFLNQLRKE…ISSILPSKPI (62 aa)) is the Sm domain. A disordered region spans residues 77–99 (VQNSQVQNTASQQSNNNQNQESK).

This sequence belongs to the Hfq family. Homohexamer.

In terms of biological role, RNA chaperone that binds small regulatory RNA (sRNAs) and mRNAs to facilitate mRNA translational regulation in response to envelope stress, environmental stress and changes in metabolite concentrations. Also binds with high specificity to tRNAs. This Caldicellulosiruptor saccharolyticus (strain ATCC 43494 / DSM 8903 / Tp8T 6331) protein is RNA-binding protein Hfq.